The sequence spans 208 residues: Ribonuclease HII (208 aa).

In terms of domain architecture, RNase H type-2 spans 12–201 (ELVAGVDEVG…VRALLEPVAV (190 aa)). 3 residues coordinate a divalent metal cation: aspartate 18, glutamate 19, and aspartate 110.

The protein belongs to the RNase HII family. The cofactor is Mn(2+). Mg(2+) is required as a cofactor.

The protein localises to the cytoplasm. The catalysed reaction is Endonucleolytic cleavage to 5'-phosphomonoester.. Its function is as follows. Endonuclease that specifically degrades the RNA of RNA-DNA hybrids. The polypeptide is Ribonuclease HII (Ectopseudomonas mendocina (strain ymp) (Pseudomonas mendocina)).